The primary structure comprises 133 residues: Cytochrome c' (133 aa).

Heme c is bound by residues Arg12, Thr72, Cys122, Cys125, and His126.

In terms of processing, binds 1 heme c group covalently per subunit.

In terms of biological role, cytochrome c' is the most widely occurring bacterial c-type cytochrome. Cytochromes c' are high-spin proteins and the heme has no sixth ligand. Their exact function is not known. The sequence is that of Cytochrome c' from Rhodocyclus tenuis (Rhodospirillum tenue).